The sequence spans 301 residues: Troponin T, cardiac muscle (301 aa).

Acidic residues-rich tracts occupy residues 1-42 (MSDL…EEEA) and 50-74 (AETE…DGPV). 2 disordered regions span residues 1–99 (MSDL…GERV) and 125–223 (ENRK…KKKK). Position 2 is an N-acetylserine (S2). S2 bears the Phosphoserine; by CK2 mark. Positions 82 to 93 (RPFMPNLVPPKI) are enriched in pro residues. Basic and acidic residues-rich tracts occupy residues 125 to 186 (ENRK…DEAR) and 206 to 223 (QTER…KKKK). Position 207 is a phosphothreonine; by PKC/PRKCA (T207). Phosphoserine; by PKC/PRKCA is present on S211. T216 carries the post-translational modification Phosphothreonine; by PKC/PRKCA and RAF1. A Phosphothreonine; by PKC/PRKCA modification is found at T297.

It belongs to the troponin T family. Binds with troponins I and C to make the thin-filament regulatory complex, troponin. In terms of processing, phosphorylation at Thr-216 by PRKCA induces significant reduction in myofilament calcium sensitivity and actomyosin ATPase activity. As to expression, the major isoform in adult heart is CTNT4.

Its function is as follows. Troponin T is the tropomyosin-binding subunit of troponin, the thin filament regulatory complex which confers calcium-sensitivity to striated muscle actomyosin ATPase activity. In Oryctolagus cuniculus (Rabbit), this protein is Troponin T, cardiac muscle (TNNT2).